Reading from the N-terminus, the 597-residue chain is tRNA uridine 5-carboxymethylaminomethyl modification enzyme MnmG (597 aa).

10-15 provides a ligand contact to FAD; sequence GGGHAG. NAD(+) is bound at residue 267–281; sequence GPRYCPSIEDKVVRF.

This sequence belongs to the MnmG family. As to quaternary structure, homodimer. Heterotetramer of two MnmE and two MnmG subunits. Requires FAD as cofactor.

It is found in the cytoplasm. Its function is as follows. NAD-binding protein involved in the addition of a carboxymethylaminomethyl (cmnm) group at the wobble position (U34) of certain tRNAs, forming tRNA-cmnm(5)s(2)U34. This Thermus thermophilus (strain ATCC 27634 / DSM 579 / HB8) protein is tRNA uridine 5-carboxymethylaminomethyl modification enzyme MnmG.